A 689-amino-acid chain; its full sequence is 1,4-alpha-glucan-branching enzyme (689 aa).

(1,4-alpha-D-glucosyl)n is bound by residues Trp93 and Lys128. The Nucleophile role is filled by Asp345. Glu400 (proton donor) is an active-site residue.

The protein belongs to the glycosyl hydrolase 13 family. GlgB subfamily.

It localises to the cytoplasm. The catalysed reaction is Transfers a segment of a (1-&gt;4)-alpha-D-glucan chain to a primary hydroxy group in a similar glucan chain.. The protein operates within glycan biosynthesis; glycogen biosynthesis. Functionally, glycogen-branching enzyme participates in the glycogen biosynthetic process along with glycogenin and glycogen synthase. Generates alpha-1,6-glucosidic branches from alpha-1,4-linked glucose chains, to increase solubility of the glycogen polymer. The sequence is that of 1,4-alpha-glucan-branching enzyme (gbeA) from Aspergillus oryzae (strain ATCC 42149 / RIB 40) (Yellow koji mold).